A 1154-amino-acid chain; its full sequence is uncharacterized protein (1154 aa).

The first 18 residues, 1-18 (MKRNIFIKLLISLLLLSS), serve as a signal peptide directing secretion. Cys19 is lipidated: N-palmitoyl cysteine. The S-diacylglycerol cysteine moiety is linked to residue Cys19. The next 4 helical transmembrane spans lie at 288 to 308 (ISVS…FLIG), 394 to 414 (LGFI…FLIF), 423 to 443 (ALIT…FMLF), and 458 to 478 (ISYA…SMII).

This sequence belongs to the TrbL/VirB6 family.

It is found in the cell membrane. This is an uncharacterized protein from Rickettsia typhi (strain ATCC VR-144 / Wilmington).